The sequence spans 394 residues: MISQQTIDIVKATAPVVAETGPKLTAHFYERMFNHNPELKDIFNMSNQRNGDQREALFNAICAYANNIDNLAALLPAVEKIAHKHTSFMITAEQYQIVGGHLLATIDELLSPGQEVLDAWGEAYGVLANVFITREEAIYQENEEKTGGWRGTREFTLIEKTQESDVITSFTFKPADGGTVSNFKPGQYLGIYLTPDAFEFQEIRQYSLSSAPRTDNYRISVKREEGGKVSNYLHNELTVGDTVQLAAPAGDFFLDVPATTPVTLISAGVGLTPTLSMLDALTEHQASVHWLHATENGSHHAFKDYVNTLADKYDHISATTWYREPLATDRPAEDFDYQGMIDLKAVASQLIDPAMHYYFCGPVGFMQHVAKQLIELDVQEDNIHYECFGPHKVL.

The Globin domain occupies 1–136 (MISQQTIDIV…LANVFITREE (136 aa)). His-85 is a binding site for heme b. Active-site charge relay system residues include Tyr-95 and Glu-135. Residues 147-394 (GGWRGTREFT…YECFGPHKVL (248 aa)) form a reductase region. In terms of domain architecture, FAD-binding FR-type spans 150-255 (RGTREFTLIE…AAPAGDFFLD (106 aa)). FAD-binding positions include Tyr-188 and 204 to 207 (RQYS). NADP(+) is bound at residue 268–273 (GVGLTP). Residue 387–390 (CFGP) coordinates FAD.

Belongs to the globin family. Two-domain flavohemoproteins subfamily. It in the C-terminal section; belongs to the flavoprotein pyridine nucleotide cytochrome reductase family. Requires heme b as cofactor. FAD is required as a cofactor.

The enzyme catalyses 2 nitric oxide + NADPH + 2 O2 = 2 nitrate + NADP(+) + H(+). It carries out the reaction 2 nitric oxide + NADH + 2 O2 = 2 nitrate + NAD(+) + H(+). In terms of biological role, is involved in NO detoxification in an aerobic process, termed nitric oxide dioxygenase (NOD) reaction that utilizes O(2) and NAD(P)H to convert NO to nitrate, which protects the bacterium from various noxious nitrogen compounds. Therefore, plays a central role in the inducible response to nitrosative stress. This Photobacterium profundum (strain SS9) protein is Flavohemoprotein.